A 298-amino-acid chain; its full sequence is MLKIGSHVSMSGKKMLLAASEEAVSYGATTFMIYTGAPQNTRRKPIEELNIEAGRKHMELNGIEEIIVHAPYIINVGNTTKPETFQLGVDFLRMEIERTSALGVAKQIVLHPGAHVGAGADAGIQQIIKGLNEVLTPEQTVNIALETMAGKGTECGRSFEEIAKIIDGVKYNEKLSVCFDTCHTHDAGYDIVNDFDGVLNEFDKIVGIDRLQVLHINDSKNVRGAGKDRHENIGFGHIGYKALHHIVHHPQLMHVPKILETPYVGEDKKDKKPPYKLEIEMLKNGTFDEGLLEKIKAQ.

The Zn(2+) site is built by His-69, His-111, Glu-146, Asp-180, His-183, His-215, Asp-228, His-230, and Glu-260.

Belongs to the AP endonuclease 2 family. Zn(2+) is required as a cofactor.

The enzyme catalyses Endonucleolytic cleavage to 5'-phosphooligonucleotide end-products.. In terms of biological role, endonuclease IV plays a role in DNA repair. It cleaves phosphodiester bonds at apurinic or apyrimidinic (AP) sites, generating a 3'-hydroxyl group and a 5'-terminal sugar phosphate. This Bacillus cereus (strain B4264) protein is Probable endonuclease 4.